The sequence spans 418 residues: Lariat debranching enzyme (418 aa).

Residues C8, H10, D39, and N84 each contribute to the a divalent metal cation site. The segment at S124–R154 is lariat recognition loop. Residues H174, H226, and H228 each contribute to the a divalent metal cation site. Positions G372–A418 are disordered. Residues D390–E406 are compositionally biased toward acidic residues. The segment covering E407–A418 has biased composition (basic and acidic residues).

The protein belongs to the lariat debranching enzyme family. Requires Fe(2+) as cofactor. The cofactor is Zn(2+). Mn(2+) serves as cofactor. As to expression, widely expressed. Expressed in roots, stems, cauline and rosette leaves, flower buds and siliques.

It is found in the nucleus. Active in presence of diverse metals including Fe(2+), Zn(2+), Mn(2+). Binds two metal cations in two adjacent alpha and beta metal-binding pockets. Cleaves the 2'-5' phosphodiester linkage at the branch point of lariat intron pre-mRNAs after splicing and converts them into linear molecules that are subsequently degraded. It thereby facilitates ribonucleotide turnover. It may also participate in retrovirus replication via an RNA lariat intermediate in cDNA synthesis. Plays en essential role during embryogenesis. This Arabidopsis thaliana (Mouse-ear cress) protein is Lariat debranching enzyme (DBR1).